Here is an 84-residue protein sequence, read N- to C-terminus: Small ribosomal subunit protein eS27w (84 aa).

The segment at 39–61 (CQGCFNITTVFSHSQTVVVCGNC) adopts a C4-type zinc-finger fold.

This sequence belongs to the eukaryotic ribosomal protein eS27 family. Requires Zn(2+) as cofactor.

The chain is Small ribosomal subunit protein eS27w (RPS27D) from Arabidopsis thaliana (Mouse-ear cress).